We begin with the raw amino-acid sequence, 375 residues long: Succinyl-diaminopimelate desuccinylase (375 aa).

Histidine 66 provides a ligand contact to Zn(2+). The active site involves aspartate 68. Aspartate 99 lines the Zn(2+) pocket. The Proton acceptor role is filled by glutamate 133. Glutamate 134, glutamate 162, and histidine 348 together coordinate Zn(2+).

The protein belongs to the peptidase M20A family. DapE subfamily. In terms of assembly, homodimer. Requires Zn(2+) as cofactor. Co(2+) is required as a cofactor.

The enzyme catalyses N-succinyl-(2S,6S)-2,6-diaminopimelate + H2O = (2S,6S)-2,6-diaminopimelate + succinate. Its pathway is amino-acid biosynthesis; L-lysine biosynthesis via DAP pathway; LL-2,6-diaminopimelate from (S)-tetrahydrodipicolinate (succinylase route): step 3/3. Catalyzes the hydrolysis of N-succinyl-L,L-diaminopimelic acid (SDAP), forming succinate and LL-2,6-diaminopimelate (DAP), an intermediate involved in the bacterial biosynthesis of lysine and meso-diaminopimelic acid, an essential component of bacterial cell walls. The sequence is that of Succinyl-diaminopimelate desuccinylase from Escherichia coli O7:K1 (strain IAI39 / ExPEC).